Reading from the N-terminus, the 189-residue chain is FUN14 domain-containing protein 2 (189 aa).

At 1–80 (METSAPRAGS…GQESGPSAEK (80 aa)) the chain is on the cytoplasmic side. Ser-10 and Ser-53 each carry phosphoserine. Residues 81-101 (YSVATQLFIGGVTGWCTGFIF) form a helical membrane-spanning segment. Topologically, residues 102–107 (QKVGKL) are mitochondrial intermembrane. A helical membrane pass occupies residues 108–128 (AATAVGGGFFLLQLANHTGYI). Topologically, residues 129–164 (KVDWQRVEKDMKKAKEQLKIRKSNQIPTEVRSKAEE) are cytoplasmic. At Ser-151 the chain carries Phosphoserine. The chain crosses the membrane as a helical span at residues 165-185 (VVSFVKKNVLVTGGFFGGFLL). At 186-189 (GMAS) the chain is on the mitochondrial intermembrane side.

This sequence belongs to the FUN14 family. As to expression, highly expressed in platelets (at protein level).

It is found in the mitochondrion outer membrane. It localises to the nucleus. In terms of biological role, binds directly and specifically 1,2-Diacyl-sn-glycero-3-phospho-(1'-myo-inositol-3',4',5'-bisphosphate) (PIP3) leading to the recruitment of PIP3 to mitochondria and may play a role in the regulation of the platelet activation via AKT/GSK3B/cGMP signaling pathways. May act as transcription factor that regulates SREBP1 (isoform SREBP-1C) expression in order to modulate triglyceride (TG) homeostasis in hepatocytes. The chain is FUN14 domain-containing protein 2 from Homo sapiens (Human).